The following is a 501-amino-acid chain: Putative BTB/POZ domain-containing protein L107 (501 aa).

One can recognise a BTB domain in the interval 16–87; that stretch reads TDLELTLVDS…FYITDIERSQ (72 aa).

It belongs to the mimivirus BTB/WD family.

The protein is Putative BTB/POZ domain-containing protein L107 of Acanthamoeba polyphaga mimivirus (APMV).